Here is a 105-residue protein sequence, read N- to C-terminus: Large ribosomal subunit protein eL36 (105 aa).

At Lys-62 the chain carries N6-acetyllysine.

It belongs to the eukaryotic ribosomal protein eL36 family. Component of the large ribosomal subunit.

It localises to the cytoplasm. The protein localises to the cytosol. Functionally, component of the large ribosomal subunit. The ribosome is a large ribonucleoprotein complex responsible for the synthesis of proteins in the cell. The protein is Large ribosomal subunit protein eL36 (Rpl36) of Rattus norvegicus (Rat).